Consider the following 257-residue polypeptide: Isoprenyl transferase (257 aa).

Asp34 is an active-site residue. Position 34 (Asp34) interacts with Mg(2+). Residues 35-38 (GNGR), Trp39, Arg47, His51, and 79-81 (STE) contribute to the substrate site. The active-site Proton acceptor is the Asn82. Substrate-binding positions include Trp83, Arg85, Arg202, and 208-210 (RLS). Residue Glu221 participates in Mg(2+) binding.

It belongs to the UPP synthase family. In terms of assembly, homodimer. Requires Mg(2+) as cofactor.

In terms of biological role, catalyzes the condensation of isopentenyl diphosphate (IPP) with allylic pyrophosphates generating different type of terpenoids. The polypeptide is Isoprenyl transferase (Geobacillus kaustophilus (strain HTA426)).